A 249-amino-acid chain; its full sequence is Tryptophan synthase alpha chain (249 aa).

Residues E43 and D54 each act as proton acceptor in the active site.

This sequence belongs to the TrpA family. Tetramer of two alpha and two beta chains.

It catalyses the reaction (1S,2R)-1-C-(indol-3-yl)glycerol 3-phosphate + L-serine = D-glyceraldehyde 3-phosphate + L-tryptophan + H2O. It functions in the pathway amino-acid biosynthesis; L-tryptophan biosynthesis; L-tryptophan from chorismate: step 5/5. Its function is as follows. The alpha subunit is responsible for the aldol cleavage of indoleglycerol phosphate to indole and glyceraldehyde 3-phosphate. The polypeptide is Tryptophan synthase alpha chain (Campylobacter jejuni subsp. jejuni serotype O:23/36 (strain 81-176)).